A 63-amino-acid polypeptide reads, in one-letter code: Conotoxin Vi5.1b (63 aa).

Positions 1 to 22 (MLCVPVFIILFIIIPFAPTSES) are cleaved as a signal peptide. The propeptide occupies 23-50 (QPKTKEEVAKASVHDNAERTLQRLWNQS). P62 carries the post-translational modification Proline amide.

It belongs to the conotoxin T superfamily. Contains 2 disulfide bonds that can be either 'C1-C3, C2-C4' or 'C1-C4, C2-C3', since these disulfide connectivities have been observed for conotoxins with cysteine framework V (for examples, see AC P0DQQ7 and AC P81755). In terms of tissue distribution, expressed by the venom duct.

It is found in the secreted. This chain is Conotoxin Vi5.1b, found in Conus virgo (Virgin cone).